A 119-amino-acid chain; its full sequence is NADH-quinone oxidoreductase subunit A (119 aa).

3 helical membrane passes run 7–27 (FPVL…MTIG), 63–83 (LIAI…PWGV), and 88–108 (IGWP…VGFV).

It belongs to the complex I subunit 3 family. NDH-1 is composed of 14 different subunits. Subunits NuoA, H, J, K, L, M, N constitute the membrane sector of the complex.

The protein localises to the cell inner membrane. It carries out the reaction a quinone + NADH + 5 H(+)(in) = a quinol + NAD(+) + 4 H(+)(out). In terms of biological role, NDH-1 shuttles electrons from NADH, via FMN and iron-sulfur (Fe-S) centers, to quinones in the respiratory chain. The immediate electron acceptor for the enzyme in this species is believed to be ubiquinone. Couples the redox reaction to proton translocation (for every two electrons transferred, four hydrogen ions are translocated across the cytoplasmic membrane), and thus conserves the redox energy in a proton gradient. The chain is NADH-quinone oxidoreductase subunit A from Ralstonia nicotianae (strain ATCC BAA-1114 / GMI1000) (Ralstonia solanacearum).